The following is a 357-amino-acid chain: 4-hydroxy-3-methylbut-2-en-1-yl diphosphate synthase (flavodoxin) (357 aa).

The [4Fe-4S] cluster site is built by Cys-264, Cys-267, Cys-299, and Glu-306.

It belongs to the IspG family. The cofactor is [4Fe-4S] cluster.

The catalysed reaction is (2E)-4-hydroxy-3-methylbut-2-enyl diphosphate + oxidized [flavodoxin] + H2O + 2 H(+) = 2-C-methyl-D-erythritol 2,4-cyclic diphosphate + reduced [flavodoxin]. The protein operates within isoprenoid biosynthesis; isopentenyl diphosphate biosynthesis via DXP pathway; isopentenyl diphosphate from 1-deoxy-D-xylulose 5-phosphate: step 5/6. Functionally, converts 2C-methyl-D-erythritol 2,4-cyclodiphosphate (ME-2,4cPP) into 1-hydroxy-2-methyl-2-(E)-butenyl 4-diphosphate. The polypeptide is 4-hydroxy-3-methylbut-2-en-1-yl diphosphate synthase (flavodoxin) (Campylobacter jejuni subsp. jejuni serotype O:2 (strain ATCC 700819 / NCTC 11168)).